A 539-amino-acid polypeptide reads, in one-letter code: Hydroxylamine reductase (539 aa).

[4Fe-4S] cluster-binding residues include cysteine 3, cysteine 6, cysteine 15, and cysteine 21. Hybrid [4Fe-2O-2S] cluster is bound by residues histidine 235, glutamate 259, cysteine 303, cysteine 394, cysteine 422, cysteine 447, glutamate 482, and lysine 484. Cysteine 394 bears the Cysteine persulfide mark.

The protein belongs to the HCP family. Requires [4Fe-4S] cluster as cofactor. Hybrid [4Fe-2O-2S] cluster serves as cofactor.

The protein localises to the cytoplasm. The catalysed reaction is A + NH4(+) + H2O = hydroxylamine + AH2 + H(+). Catalyzes the reduction of hydroxylamine to form NH(3) and H(2)O. This chain is Hydroxylamine reductase, found in Methanocaldococcus jannaschii (strain ATCC 43067 / DSM 2661 / JAL-1 / JCM 10045 / NBRC 100440) (Methanococcus jannaschii).